A 490-amino-acid polypeptide reads, in one-letter code: Betaine aldehyde dehydrogenase (490 aa).

Residues threonine 26, isoleucine 27, and aspartate 93 each coordinate K(+). 150–152 (GAW) is an NAD(+) binding site. The active-site Charge relay system is the lysine 162. 176 to 179 (KPSE) lines the NAD(+) pocket. Valine 180 contributes to the K(+) binding site. Position 230–233 (230–233 (GVAS)) interacts with NAD(+). Leucine 246 lines the K(+) pocket. The Proton acceptor role is filled by glutamate 252. Glycine 254, cysteine 286, and glutamate 387 together coordinate NAD(+). Cysteine 286 (nucleophile) is an active-site residue. Cysteine 286 carries the cysteine sulfenic acid (-SOH) modification. K(+) contacts are provided by lysine 457 and glycine 460. Residue glutamate 464 is the Charge relay system of the active site.

It belongs to the aldehyde dehydrogenase family. Dimer of dimers. K(+) is required as a cofactor.

It carries out the reaction betaine aldehyde + NAD(+) + H2O = glycine betaine + NADH + 2 H(+). It functions in the pathway amine and polyamine biosynthesis; betaine biosynthesis via choline pathway; betaine from betaine aldehyde: step 1/1. Its function is as follows. Involved in the biosynthesis of the osmoprotectant glycine betaine. Catalyzes the irreversible oxidation of betaine aldehyde to the corresponding acid. The polypeptide is Betaine aldehyde dehydrogenase (Escherichia coli O8 (strain IAI1)).